Consider the following 593-residue polypeptide: Glucose-6-phosphate 1-dehydrogenase, chloroplastic (593 aa).

NADP(+) is bound by residues 116 to 123 (GASGDLAK) and arginine 150. Residues cysteine 168 and cysteine 176 are joined by a disulfide bond. Lysine 253 lines the NADP(+) pocket. Residues lysine 253, 283–287 (HYLGK), glutamate 321, and aspartate 340 contribute to the D-glucose 6-phosphate site. Catalysis depends on histidine 345, which acts as the Proton acceptor. Lysine 438 is an NADP(+) binding site. Residues lysine 441 and arginine 446 each coordinate D-glucose 6-phosphate. The NADP(+) site is built by arginine 451 and arginine 480. Glutamine 482 contacts D-glucose 6-phosphate. NADP(+) is bound by residues 488 to 490 (YLK) and arginine 573.

Belongs to the glucose-6-phosphate dehydrogenase family. As to quaternary structure, homodimer.

The protein localises to the plastid. Its subcellular location is the chloroplast. The enzyme catalyses D-glucose 6-phosphate + NADP(+) = 6-phospho-D-glucono-1,5-lactone + NADPH + H(+). Its pathway is carbohydrate degradation; pentose phosphate pathway; D-ribulose 5-phosphate from D-glucose 6-phosphate (oxidative stage): step 1/3. Regulated by metabolites. Post-translationally inactivated by cysteine-mediated redox modification via the ferredoxin-thioredoxin system in the light and this avoids futile cycles with photosynthetic CO2 fixation. In terms of biological role, catalyzes the rate-limiting step of the oxidative pentose-phosphate pathway, which represents a route for the dissimilation of carbohydrates besides glycolysis. The main function of this enzyme is to provide reducing power (NADPH) and pentose phosphates for fatty acid and nucleic acid synthesis which are involved in membrane synthesis and cell division. This Nicotiana tabacum (Common tobacco) protein is Glucose-6-phosphate 1-dehydrogenase, chloroplastic.